The sequence spans 181 residues: Probable pyruvoyl-dependent arginine decarboxylase (181 aa).

Pyruvic acid (Ser) is present on Ser-43.

The protein belongs to the PdaD family. The cofactor is pyruvate.

The enzyme catalyses L-arginine + H(+) = agmatine + CO2. The protein is Probable pyruvoyl-dependent arginine decarboxylase of Chlorobium limicola (strain DSM 245 / NBRC 103803 / 6330).